Here is a 233-residue protein sequence, read N- to C-terminus: Large ribosomal subunit protein uL1 (233 aa).

It belongs to the universal ribosomal protein uL1 family. In terms of assembly, part of the 50S ribosomal subunit.

In terms of biological role, binds directly to 23S rRNA. The L1 stalk is quite mobile in the ribosome, and is involved in E site tRNA release. Functionally, protein L1 is also a translational repressor protein, it controls the translation of the L11 operon by binding to its mRNA. The chain is Large ribosomal subunit protein uL1 from Laribacter hongkongensis (strain HLHK9).